The chain runs to 326 residues: Phenylalanine--tRNA ligase alpha subunit (326 aa).

Glu-251 serves as a coordination point for Mg(2+).

This sequence belongs to the class-II aminoacyl-tRNA synthetase family. Phe-tRNA synthetase alpha subunit type 1 subfamily. Tetramer of two alpha and two beta subunits. Requires Mg(2+) as cofactor.

It is found in the cytoplasm. The enzyme catalyses tRNA(Phe) + L-phenylalanine + ATP = L-phenylalanyl-tRNA(Phe) + AMP + diphosphate + H(+). This chain is Phenylalanine--tRNA ligase alpha subunit, found in Pseudoalteromonas atlantica (strain T6c / ATCC BAA-1087).